The following is a 293-amino-acid chain: Protease HtpX (293 aa).

2 helical membrane passes run Phe-2–Leu-22 and Leu-38–Phe-58. Residue His-145 participates in Zn(2+) binding. Residue Glu-146 is part of the active site. Position 149 (His-149) interacts with Zn(2+). Helical transmembrane passes span Val-156–Ile-176 and Ile-193–Ile-213. Residue Glu-222 participates in Zn(2+) binding.

It belongs to the peptidase M48B family. It depends on Zn(2+) as a cofactor.

It is found in the cell inner membrane. This chain is Protease HtpX, found in Hahella chejuensis (strain KCTC 2396).